We begin with the raw amino-acid sequence, 586 residues long: Proteasome-associated ATPase (586 aa).

Positions 11 to 76 (AWRELEAVRA…LREEVDRLGQ (66 aa)) form a coiled coil. 273–278 (GCGKTL) is a binding site for ATP. Positions 585 to 586 (YL) are docks into pockets in the proteasome alpha-ring.

This sequence belongs to the AAA ATPase family. As to quaternary structure, homohexamer. Assembles into a hexameric ring structure that caps the 20S proteasome core. Strongly interacts with the prokaryotic ubiquitin-like protein Pup through a hydrophobic interface; the interacting region of ARC lies in its N-terminal coiled-coil domain. There is one Pup binding site per ARC hexamer ring. Upon ATP-binding, the C-terminus of ARC interacts with the alpha-rings of the proteasome core, possibly by binding to the intersubunit pockets.

Its pathway is protein degradation; proteasomal Pup-dependent pathway. ATPase which is responsible for recognizing, binding, unfolding and translocation of pupylated proteins into the bacterial 20S proteasome core particle. May be essential for opening the gate of the 20S proteasome via an interaction with its C-terminus, thereby allowing substrate entry and access to the site of proteolysis. Thus, the C-termini of the proteasomal ATPase may function like a 'key in a lock' to induce gate opening and therefore regulate proteolysis. The sequence is that of Proteasome-associated ATPase from Nocardia farcinica (strain IFM 10152).